The chain runs to 262 residues: Putative glutamine--fructose-6-phosphate aminotransferase [isomerizing] (262 aa).

Residue cysteine 2 is the Nucleophile; for GATase activity of the active site. The region spanning 2-262 is the Glutamine amidotransferase type-2 domain; sequence CGIFGYCNFL…RKSPPFVHNT (261 aa).

The catalysed reaction is D-fructose 6-phosphate + L-glutamine = D-glucosamine 6-phosphate + L-glutamate. It participates in nucleotide-sugar biosynthesis; UDP-N-acetyl-alpha-D-glucosamine biosynthesis; alpha-D-glucosamine 6-phosphate from D-fructose 6-phosphate: step 1/1. In terms of biological role, involved in amino sugar synthesis (formation of chitin, supplies the amino sugars of asparagine-linked oligosaccharides of glycoproteins). In Saccharomyces cerevisiae (strain ATCC 204508 / S288c) (Baker's yeast), this protein is Putative glutamine--fructose-6-phosphate aminotransferase [isomerizing].